We begin with the raw amino-acid sequence, 325 residues long: Acetyl-coenzyme A carboxylase carboxyl transferase subunit alpha (325 aa).

The 255-residue stretch at 44-298 (QLEARADQLR…KAAIQDNLQA (255 aa)) folds into the CoA carboxyltransferase C-terminal domain.

The protein belongs to the AccA family. As to quaternary structure, acetyl-CoA carboxylase is a heterohexamer composed of biotin carboxyl carrier protein (AccB), biotin carboxylase (AccC) and two subunits each of ACCase subunit alpha (AccA) and ACCase subunit beta (AccD).

It localises to the cytoplasm. The enzyme catalyses N(6)-carboxybiotinyl-L-lysyl-[protein] + acetyl-CoA = N(6)-biotinyl-L-lysyl-[protein] + malonyl-CoA. Its pathway is lipid metabolism; malonyl-CoA biosynthesis; malonyl-CoA from acetyl-CoA: step 1/1. Its function is as follows. Component of the acetyl coenzyme A carboxylase (ACC) complex. First, biotin carboxylase catalyzes the carboxylation of biotin on its carrier protein (BCCP) and then the CO(2) group is transferred by the carboxyltransferase to acetyl-CoA to form malonyl-CoA. This is Acetyl-coenzyme A carboxylase carboxyl transferase subunit alpha from Picosynechococcus sp. (strain ATCC 27264 / PCC 7002 / PR-6) (Agmenellum quadruplicatum).